Consider the following 227-residue polypeptide: MKFAVIVLPGSNCDIDMFHAIKDELGEEAEYVWHTETSLDEYDGVLIPGGFSYGDYLRCGAIARFANIMPAVKKAAEEGKPVLGVCNGFQILQELGLLPGAMRRNKDLKFICRPVELIVQNNETLFTSSYGKGESITIPVAHGEGNFYCDEETLAGLQENNQIAFTYGTDINGSVADIAGVVNEKGNVLGMMPHPERAVDSLLGSADGLKLFQSIVKNWRETHVATA.

The 223-residue stretch at 3–225 (FAVIVLPGSN…VKNWRETHVA (223 aa)) folds into the Glutamine amidotransferase type-1 domain. Cys86 serves as the catalytic Nucleophile. Active-site residues include His194 and Glu196.

In terms of assembly, part of the FGAM synthase complex composed of 1 PurL, 1 PurQ and 2 PurS subunits.

It is found in the cytoplasm. It catalyses the reaction N(2)-formyl-N(1)-(5-phospho-beta-D-ribosyl)glycinamide + L-glutamine + ATP + H2O = 2-formamido-N(1)-(5-O-phospho-beta-D-ribosyl)acetamidine + L-glutamate + ADP + phosphate + H(+). It carries out the reaction L-glutamine + H2O = L-glutamate + NH4(+). Its pathway is purine metabolism; IMP biosynthesis via de novo pathway; 5-amino-1-(5-phospho-D-ribosyl)imidazole from N(2)-formyl-N(1)-(5-phospho-D-ribosyl)glycinamide: step 1/2. Functionally, part of the phosphoribosylformylglycinamidine synthase complex involved in the purines biosynthetic pathway. Catalyzes the ATP-dependent conversion of formylglycinamide ribonucleotide (FGAR) and glutamine to yield formylglycinamidine ribonucleotide (FGAM) and glutamate. The FGAM synthase complex is composed of three subunits. PurQ produces an ammonia molecule by converting glutamine to glutamate. PurL transfers the ammonia molecule to FGAR to form FGAM in an ATP-dependent manner. PurS interacts with PurQ and PurL and is thought to assist in the transfer of the ammonia molecule from PurQ to PurL. The chain is Phosphoribosylformylglycinamidine synthase subunit PurQ from Bacillus licheniformis (strain ATCC 14580 / DSM 13 / JCM 2505 / CCUG 7422 / NBRC 12200 / NCIMB 9375 / NCTC 10341 / NRRL NRS-1264 / Gibson 46).